The sequence spans 471 residues: Tryptophan--tRNA ligase, cytoplasmic (471 aa).

Positions Ser8–Pro64 constitute a WHEP-TRS domain. The segment at Lys59–Glu79 is disordered. Lys154 carries the post-translational modification N6-succinyllysine. A 'HIGH' region motif is present at residues Pro164 to His173. A 'KMSKS' region motif is present at residues Lys349–Ser353. A Phosphoserine modification is found at Ser351.

Belongs to the class-I aminoacyl-tRNA synthetase family. In terms of assembly, homodimer. Interacts with an oxidized form of GAPDH. GAPDH stimulates the aminoacylation activity of isoform 2. In terms of processing, proteolytic cleavage generates 2 forms; T1-TrpRS and T2-TrpRS.

It is found in the cytoplasm. The catalysed reaction is tRNA(Trp) + L-tryptophan + ATP = L-tryptophyl-tRNA(Trp) + AMP + diphosphate + H(+). Catalyzes the attachment of tryptophan to tRNA(Trp) in a two-step reaction: tryptophan is first activated by ATP to form Trp-AMP and then transferred to the acceptor end of the tRNA(Trp). Its function is as follows. Has no angiostatic activity. In terms of biological role, possesses an angiostatic activity but has no aminoacylation activity. Inhibits fluid shear stress-activated responses of endothelial cells. Regulates ERK, Akt, and eNOS activation pathways that are associated with angiogenesis, cytoskeletal reorganization and shear stress-responsive gene expression. Functionally, has an angiostatic activity. In Homo sapiens (Human), this protein is Tryptophan--tRNA ligase, cytoplasmic.